A 407-amino-acid chain; its full sequence is Phospholipase A1-II 7 (407 aa).

The Acyl-ester intermediate role is filled by serine 230. Active-site charge relay system residues include serine 230, aspartate 299, and histidine 336.

Belongs to the AB hydrolase superfamily. Lipase family.

It is found in the cytoplasm. In terms of biological role, acylhydrolase that catalyzes the hydrolysis of phospholipids at the sn-1 position. This is Phospholipase A1-II 7 from Oryza sativa subsp. indica (Rice).